Here is a 98-residue protein sequence, read N- to C-terminus: MALTKAEMAEHLFETLGINKRVAKEMVESFFEEIRGALESGEQVKLSGFGNFDLRDKNQRPGRNPKTGEDIPISARRVVTFRPGQKLKTRVEASNAGK.

The interval 49–71 (FGNFDLRDKNQRPGRNPKTGEDI) is disordered.

Belongs to the bacterial histone-like protein family. Heterodimer of an alpha and a beta chain.

In terms of biological role, this protein is one of the two subunits of integration host factor, a specific DNA-binding protein that functions in genetic recombination as well as in transcriptional and translational control. In Shewanella sp. (strain MR-4), this protein is Integration host factor subunit alpha.